Consider the following 388-residue polypeptide: Interferon alpha/beta receptor 1b (388 aa).

Fibronectin type-III domains are found at residues L5–D102 and P109–D211. Residues I217–Y237 traverse the membrane as a helical segment. A disordered region spans residues T308–S357. Basic and acidic residues predominate over residues D317–S326. Polar residues predominate over residues I331–G342.

It belongs to the type II cytokine receptor family. As to quaternary structure, heterodimer with IFNAR2; forming the receptor for type I interferon.

It is found in the cell membrane. Its subcellular location is the cytoplasm. The protein resides in the perinuclear region. In terms of biological role, together with IFNAR2, forms the heterodimeric receptor for type I interferons (including interferons alpha, beta, epsilon, omega and kappa). Type I interferon binding activates the JAK-STAT signaling cascade, resulting in transcriptional activation or repression of interferon-regulated genes that encode the effectors of the interferon response. Mechanistically, type I interferon-binding brings the IFNAR1 and IFNAR2 subunits into close proximity with one another, driving their associated Janus kinases (JAKs) (TYK2 bound to IFNAR1 and JAK1 bound to IFNAR2) to cross-phosphorylate one another. The activated kinases phosphorylate specific tyrosine residues on the intracellular domains of IFNAR1 and IFNAR2, forming docking sites for the STAT transcription factors. STAT proteins are then phosphorylated by the JAKs, promoting their translocation into the nucleus to regulate expression of interferon-regulated genes. This Oncorhynchus mykiss (Rainbow trout) protein is Interferon alpha/beta receptor 1b.